We begin with the raw amino-acid sequence, 430 residues long: Histidine--tRNA ligase (430 aa).

This sequence belongs to the class-II aminoacyl-tRNA synthetase family. In terms of assembly, homodimer.

The protein localises to the cytoplasm. It catalyses the reaction tRNA(His) + L-histidine + ATP = L-histidyl-tRNA(His) + AMP + diphosphate + H(+). The protein is Histidine--tRNA ligase of Acaryochloris marina (strain MBIC 11017).